The chain runs to 122 residues: Holo-[acyl-carrier-protein] synthase (122 aa).

2 residues coordinate Mg(2+): Asp8 and Glu57.

It belongs to the P-Pant transferase superfamily. AcpS family. It depends on Mg(2+) as a cofactor.

Its subcellular location is the cytoplasm. It carries out the reaction apo-[ACP] + CoA = holo-[ACP] + adenosine 3',5'-bisphosphate + H(+). Functionally, transfers the 4'-phosphopantetheine moiety from coenzyme A to a Ser of acyl-carrier-protein. The chain is Holo-[acyl-carrier-protein] synthase from Protochlamydia amoebophila (strain UWE25).